A 361-amino-acid chain; its full sequence is Polyribonucleotide 5'-hydroxyl-kinase MJ1315 (361 aa).

Residue 39 to 46 (GGVDSGKT) participates in ATP binding.

The cofactor is a divalent metal cation.

It catalyses the reaction a 5'-end dephospho-2'-deoxyribonucleoside-DNA + ATP = a 5'-end 5'-phospho-2'-deoxyribonucleoside-DNA + ADP + H(+). The enzyme catalyses a 5'-end dephospho-ribonucleoside-RNA + ATP = a 5'-end 5'-phospho-ribonucleoside-RNA + ADP + H(+). In terms of biological role, polynucleotide kinase that can phosphorylate the 5'-hydroxyl groups of both single-stranded RNA (ssRNA) and single-stranded DNA (ssDNA). Exhibits a strong preference for ssRNA. In Methanocaldococcus jannaschii (strain ATCC 43067 / DSM 2661 / JAL-1 / JCM 10045 / NBRC 100440) (Methanococcus jannaschii), this protein is Polyribonucleotide 5'-hydroxyl-kinase MJ1315.